The chain runs to 552 residues: Carboxypeptidase Y homolog A (552 aa).

The signal sequence occupies residues 1 to 18 (MRIATSTLLVGAASAAFA). Residues 19–133 (PQDGTQRVLN…KLDNYNLRAR (115 aa)) constitute a propeptide that is removed on maturation. Cystine bridges form between Cys-187-Cys-427, Cys-321-Cys-335, Cys-345-Cys-368, Cys-352-Cys-361, and Cys-390-Cys-397. Asn-218 carries N-linked (GlcNAc...) asparagine glycosylation. The active site involves Ser-274. Asp-466 is an active-site residue. Asn-516 is a glycosylation site (N-linked (GlcNAc...) asparagine). His-527 is a catalytic residue.

This sequence belongs to the peptidase S10 family.

It is found in the vacuole. The enzyme catalyses Release of a C-terminal amino acid with broad specificity.. Its function is as follows. Vacuolar carboxypeptidase involved in degradation of small peptides. Digests preferentially peptides containing an aliphatic or hydrophobic residue in P1' position, as well as methionine, leucine or phenylalanine in P1 position of ester substrate. The sequence is that of Carboxypeptidase Y homolog A (CPYA) from Pyricularia oryzae (strain 70-15 / ATCC MYA-4617 / FGSC 8958) (Rice blast fungus).